Consider the following 255-residue polypeptide: Methylthioribulose-1-phosphate dehydratase (255 aa).

Residue cysteine 98 participates in substrate binding. The Zn(2+) site is built by histidine 116 and histidine 118. Glutamate 150 (proton donor/acceptor) is an active-site residue. Histidine 207 is a binding site for Zn(2+).

This sequence belongs to the aldolase class II family. MtnB subfamily. Zn(2+) is required as a cofactor.

The protein localises to the cytoplasm. It carries out the reaction 5-(methylsulfanyl)-D-ribulose 1-phosphate = 5-methylsulfanyl-2,3-dioxopentyl phosphate + H2O. It functions in the pathway amino-acid biosynthesis; L-methionine biosynthesis via salvage pathway; L-methionine from S-methyl-5-thio-alpha-D-ribose 1-phosphate: step 2/6. Functionally, catalyzes the dehydration of methylthioribulose-1-phosphate (MTRu-1-P) into 2,3-diketo-5-methylthiopentyl-1-phosphate (DK-MTP-1-P). The sequence is that of Methylthioribulose-1-phosphate dehydratase from Pyricularia oryzae (strain 70-15 / ATCC MYA-4617 / FGSC 8958) (Rice blast fungus).